Reading from the N-terminus, the 144-residue chain is Actin-associated protein FAM107A (144 aa).

The stretch at 70–90 (VLEHRRRNQLIKKKEEELEAK) forms a coiled coil. Positions 74–84 (RRRNQLIKKKE) match the Nuclear localization signal motif. Positions 104-123 (QQRLNQLENPPQRDEDHAPE) are disordered. Basic and acidic residues predominate over residues 114-123 (PQRDEDHAPE).

As to quaternary structure, interacts with ACTB. Interacts with F-actin. Interacts with PRDX1. Interacts with COMMD1; this interaction stabilizes COMMD1 in the nucleus. Interacts with MAP1A. Expressed in septum, the neocortex, the CA3 region of the hippocampus and the cerebellum (at protein level).

Its subcellular location is the nucleus. The protein localises to the cytoplasm. It is found in the cytoskeleton. It localises to the stress fiber. The protein resides in the cell junction. Its subcellular location is the focal adhesion. The protein localises to the cell projection. It is found in the ruffle membrane. It localises to the synapse. Stress-inducible actin-binding protein that plays a role in synaptic and cognitive functions by modulating actin filamentous (F-actin) dynamics. Mediates polymerization of globular actin to F-actin. Also binds to, stabilizes and bundles F-actin. Involved in synaptic function by regulating neurite outgrowth in an actin-dependent manner and for the acquisition of hippocampus-dependent cognitive function, such as learning and long-term memory. Plays a role in the actin and microtubule cytoskeleton organization; negatively regulates focal adhesion (FA) assembly promoting malignant glial cell migration in an actin-, microtubule- and MAP1A-dependent manner. Also involved in neuroblastoma G1/S phase cell cycle progression and cell proliferation inhibition by stimulating ubiquitination of NF-kappa-B subunit RELA and NF-kappa-B degradation in a COMMD1- and actin-dependent manner. May play a role in tumor development. The polypeptide is Actin-associated protein FAM107A (Mus musculus (Mouse)).